The primary structure comprises 498 residues: Cytochrome P450 71B31 (498 aa).

Residues 3–23 (MFLGLLFLFPLFFILFKNLLP) form a helical membrane-spanning segment. C441 is a binding site for heme.

It belongs to the cytochrome P450 family. Heme serves as cofactor.

It localises to the membrane. The polypeptide is Cytochrome P450 71B31 (CYP71B31) (Arabidopsis thaliana (Mouse-ear cress)).